The chain runs to 163 residues: Troponin C, skeletal muscle (163 aa).

A2 is modified (blocked amino end (Ala)). 4 consecutive EF-hand domains span residues 18–53, 54–89, 94–129, and 130–163; these read EMIAEFKAAFDMFDADGGGDISTKELGTVMRMLGQN, PTKEELDAIIEEVDEDGSGTIDFEEFLVMMVRQMKE, KSEEELANCFRIFDKNADGFIDIEELGEILRATGEH, and VTEEDIEDLMKDSDKNNDGRIDFDEFLKMMEGVQ. Ca(2+) is bound by residues D31, D33, D37, E42, D67, D69, S71, T73, E78, D107, N109, D111, E118, D143, N145, D147, R149, and E154.

The protein belongs to the troponin C family.

Its function is as follows. Troponin is the central regulatory protein of striated muscle contraction. Tn consists of three components: Tn-I which is the inhibitor of actomyosin ATPase, Tn-T which contains the binding site for tropomyosin and Tn-C. The binding of calcium to Tn-C abolishes the inhibitory action of Tn on actin filaments. The sequence is that of Troponin C, skeletal muscle (TNNC2) from Gallus gallus (Chicken).